The chain runs to 351 residues: Dihydroorotate dehydrogenase (quinone) (351 aa).

FMN is bound by residues Ala67–Lys71 and Thr91. Residue Lys71 participates in substrate binding. Asn116 to Phe120 is a binding site for substrate. Positions 145 and 178 each coordinate FMN. Asn178 lines the substrate pocket. The Nucleophile role is filled by Ser181. Asn183 provides a ligand contact to substrate. 2 residues coordinate FMN: Lys214 and Thr242. Asn243–Thr244 is a substrate binding site. FMN is bound by residues Gly262, Gly291, and Tyr312–Ser313.

Belongs to the dihydroorotate dehydrogenase family. Type 2 subfamily. Monomer. It depends on FMN as a cofactor.

It is found in the cell membrane. It catalyses the reaction (S)-dihydroorotate + a quinone = orotate + a quinol. Its pathway is pyrimidine metabolism; UMP biosynthesis via de novo pathway; orotate from (S)-dihydroorotate (quinone route): step 1/1. In terms of biological role, catalyzes the conversion of dihydroorotate to orotate with quinone as electron acceptor. The protein is Dihydroorotate dehydrogenase (quinone) of Helicobacter pylori (strain P12).